We begin with the raw amino-acid sequence, 197 residues long: Putative sulfur carrier protein aq_1421 (197 aa).

C17 serves as the catalytic Cysteine persulfide intermediate.

The protein belongs to the sulfur carrier protein TusA family.

The chain is Putative sulfur carrier protein aq_1421 from Aquifex aeolicus (strain VF5).